The chain runs to 152 residues: MSHHVYELPIDVSQIQTLLPHRYPFLLVDRILELDLETKWIVAQKNVSINEPFFQGHFPNRPVMPGVLIIEALAQVGGVMTQLGLGRDALSQLFYMVKVDKARFNKQVVPGDVLIMEVQMKRLIRNVGCFYGEAKVDGEVVASAEVMCAGAR.

Histidine 57 is a catalytic residue.

The protein belongs to the thioester dehydratase family. FabZ subfamily.

It is found in the cytoplasm. The enzyme catalyses a (3R)-hydroxyacyl-[ACP] = a (2E)-enoyl-[ACP] + H2O. In terms of biological role, involved in unsaturated fatty acids biosynthesis. Catalyzes the dehydration of short chain beta-hydroxyacyl-ACPs and long chain saturated and unsaturated beta-hydroxyacyl-ACPs. The sequence is that of 3-hydroxyacyl-[acyl-carrier-protein] dehydratase FabZ from Xanthomonas axonopodis pv. citri (strain 306).